Consider the following 493-residue polypeptide: Tripartite motif-containing protein 5 (493 aa).

Ala-2 carries the N-acetylalanine modification. The RING-type zinc finger occupies 15 to 59 (CPICLELLTQPLSLDCGHSFCQACLTANHKKSTLDKGERSCPVCR). The residue at position 86 (Ser-86) is a Phosphoserine. The B box-type zinc-finger motif lies at 90-132 (QKVDHCARHGEKLLLFCKEDGKVICWLCERSQEHRGHHTFLTE). Zn(2+) is bound by residues Cys-95, His-98, Cys-117, and His-123. Residues 131–223 (TEEVAQKYQV…LTKSETEMVQ (93 aa)) adopt a coiled-coil conformation. The required for interaction with GABARAP and for autophagy stretch occupies residues 185–198 (FEQLRDILDWEESN). Residues 281 to 493 (LKGMLEVFRE…VPMTLCSPSS (213 aa)) enclose the B30.2/SPRY domain.

This sequence belongs to the TRIM/RBCC family. As to quaternary structure, can form homodimers and homotrimers. In addition to lower-order dimerization, also exhibits a higher-order multimerization and both low- and high-order multimerizations are essential for its restriction activity. Interacts with BTBD1 and BTBD2. Interacts with PSMC4, PSMC5, PSMD7 and HSPA8/HSC70. Interacts (via B30.2/SPRY domain) with HSPA1A/B. Interacts with PSMC2, MAP3K7/TAK1, TAB2 and TAB3. Interacts with SQSTM1. Interacts with TRIM6 and TRIM34. Interacts with ULK1 (phosphorylated form), GABARAP, GABARAPL1, GABARAPL2, MAP1LC3A, MAP1LC3C and BECN1. Post-translationally, degraded in a proteasome-independent fashion in the absence of viral infection but in a proteasome-dependent fashion following exposure to restriction sensitive virus. In terms of processing, autoubiquitinated in a RING finger- and UBE2D2-dependent manner. Monoubiquitinated by TRIM21. Deubiquitinated by Yersinia YopJ. Ubiquitination may not lead to proteasomal degradation.

Its subcellular location is the cytoplasm. The protein resides in the nucleus. The catalysed reaction is S-ubiquitinyl-[E2 ubiquitin-conjugating enzyme]-L-cysteine + [acceptor protein]-L-lysine = [E2 ubiquitin-conjugating enzyme]-L-cysteine + N(6)-ubiquitinyl-[acceptor protein]-L-lysine.. The protein operates within protein modification; protein ubiquitination. Functionally, capsid-specific restriction factor that prevents infection from non-host-adapted retroviruses. Blocks viral replication early in the life cycle, after viral entry but before reverse transcription. In addition to acting as a capsid-specific restriction factor, also acts as a pattern recognition receptor that activates innate immune signaling in response to the retroviral capsid lattice. Binding to the viral capsid triggers its E3 ubiquitin ligase activity, and in concert with the heterodimeric ubiquitin conjugating enzyme complex UBE2V1-UBE2N (also known as UBC13-UEV1A complex) generates 'Lys-63'-linked polyubiquitin chains, which in turn are catalysts in the autophosphorylation of the MAP3K7/TAK1 complex (includes TAK1, TAB2, and TAB3). Activation of the MAP3K7/TAK1 complex by autophosphorylation results in the induction and expression of NF-kappa-B and MAPK-responsive inflammatory genes, thereby leading to an innate immune response in the infected cell. Plays a role in regulating autophagy through activation of autophagy regulator BECN1 by causing its dissociation from its inhibitors BCL2 and TAB2. In Pongo pygmaeus (Bornean orangutan), this protein is Tripartite motif-containing protein 5 (TRIM5).